We begin with the raw amino-acid sequence, 200 residues long: dITP/XTP pyrophosphatase (200 aa).

Residue 8–13 (TGNQGK) coordinates substrate. Catalysis depends on Asp-69, which acts as the Proton acceptor. Asp-69 is a binding site for Mg(2+). Substrate-binding positions include Ser-70, 154–157 (FGYD), Lys-177, and 182–183 (HR).

This sequence belongs to the HAM1 NTPase family. As to quaternary structure, homodimer. Mg(2+) is required as a cofactor.

It carries out the reaction XTP + H2O = XMP + diphosphate + H(+). It catalyses the reaction dITP + H2O = dIMP + diphosphate + H(+). The enzyme catalyses ITP + H2O = IMP + diphosphate + H(+). Functionally, pyrophosphatase that catalyzes the hydrolysis of nucleoside triphosphates to their monophosphate derivatives, with a high preference for the non-canonical purine nucleotides XTP (xanthosine triphosphate), dITP (deoxyinosine triphosphate) and ITP. Seems to function as a house-cleaning enzyme that removes non-canonical purine nucleotides from the nucleotide pool, thus preventing their incorporation into DNA/RNA and avoiding chromosomal lesions. This Vibrio cholerae serotype O1 (strain ATCC 39315 / El Tor Inaba N16961) protein is dITP/XTP pyrophosphatase.